The following is an 843-amino-acid chain: Translation initiation factor IF-2 (843 aa).

2 disordered regions span residues 55–185 (AEAV…EDRD) and 209–228 (KVEE…QVKV). Positions 62–106 (PQEKPKKSAPKKEEKPKEEVKKEAEEKVAASKKEEEKPQEKKSVE) are enriched in basic and acidic residues. Residues 114–128 (LKKRRGLVIVKKKRP) are compositionally biased toward basic residues. Basic and acidic residues predominate over residues 129 to 141 (KVEPKVEEKEAKQ). Basic residues predominate over residues 156 to 165 (LKRKPKKAKK). Composition is skewed to basic and acidic residues over residues 171–185 (KKNE…EDRD) and 209–221 (KVEE…EPQK). Residues 342–511 (ERPPVITIMG…LLQAEIMELK (170 aa)) enclose the tr-type G domain. The tract at residues 351–358 (GHVDHGKT) is G1. Residue 351-358 (GHVDHGKT) participates in GTP binding. The tract at residues 376–380 (GITQH) is G2. Positions 397–400 (DTPG) are G3. GTP-binding positions include 397-401 (DTPGH) and 451-454 (NKID). The interval 451–454 (NKID) is G4. The interval 487-489 (SAK) is G5.

Belongs to the TRAFAC class translation factor GTPase superfamily. Classic translation factor GTPase family. IF-2 subfamily.

It localises to the cytoplasm. One of the essential components for the initiation of protein synthesis. Protects formylmethionyl-tRNA from spontaneous hydrolysis and promotes its binding to the 30S ribosomal subunits. Also involved in the hydrolysis of GTP during the formation of the 70S ribosomal complex. This chain is Translation initiation factor IF-2, found in Nitratiruptor sp. (strain SB155-2).